A 293-amino-acid chain; its full sequence is Elongation factor Ts (293 aa).

Residues 79 to 82 are involved in Mg(2+) ion dislocation from EF-Tu; it reads TDFV.

It belongs to the EF-Ts family.

It localises to the cytoplasm. Its function is as follows. Associates with the EF-Tu.GDP complex and induces the exchange of GDP to GTP. It remains bound to the aminoacyl-tRNA.EF-Tu.GTP complex up to the GTP hydrolysis stage on the ribosome. In Bacillus pumilus (strain SAFR-032), this protein is Elongation factor Ts.